Reading from the N-terminus, the 456-residue chain is GTPase Der (456 aa).

EngA-type G domains follow at residues 4 to 169 (PVVA…PSKD) and 178 to 353 (VQLA…DQSR). GTP is bound by residues 10 to 17 (GRPNVGKS), 57 to 61 (DTGGL), 120 to 123 (NKCE), 184 to 191 (GRPNVGKS), 231 to 235 (DTAGI), and 296 to 299 (NKWD). Residues 354–439 (RRVTTSVVNE…PIKLFWRGKQ (86 aa)) enclose the KH-like domain.

This sequence belongs to the TRAFAC class TrmE-Era-EngA-EngB-Septin-like GTPase superfamily. EngA (Der) GTPase family. In terms of assembly, associates with the 50S ribosomal subunit.

In terms of biological role, GTPase that plays an essential role in the late steps of ribosome biogenesis. This is GTPase Der from Prochlorococcus marinus (strain NATL2A).